The following is a 270-amino-acid chain: Interleukin-33 (270 aa).

A homeodomain-like HTH domain region spans residues 1–65 (MKPKMKYSTN…EACYFRRETT (65 aa)). Positions 1–94 (MKPKMKYSTN…CQQQSTVECF (94 aa)) are excised as a propeptide. The segment at 64-111 (TTKRPSLKTGRKHKRHLVLAACQQQSTVECFAFGISGVQKYTRALHDS) is interaction with RELA.

The protein belongs to the IL-1 family. Highly divergent. Forms a 1:1:1 heterotrimeric complex with its primary high-affinity receptor IL1RL1 and the coreceptor IL1RAP. Interacts with cargo receptor TMED10; the interaction mediates the translocation from the cytoplasm into the ERGIC (endoplasmic reticulum-Golgi intermediate compartment) and thereby secretion. In terms of assembly, (Microbial infection) Interacts (in reduced form) with H.polygyrus ARI. In terms of processing, the full-length protein can be released from cells and is able to signal via the IL1RL1/ST2 receptor. However, proteolytic processing by CELA1, CSTG/cathepsin G and ELANE/neutrophil elastase produces C-terminal peptides that are more active than the unprocessed full length protein. May also be proteolytically processed by calpains. Proteolytic cleavage mediated by apoptotic caspases including CASP3 and CASP7 results in IL33 inactivation. In vitro proteolytic cleavage by CASP1 was reported but could not be confirmed in vivo suggesting that IL33 is probably not a direct substrate for that caspase. Expressed at high level in high endothelial venules found in tonsils, Peyer patches and mesenteric lymph nodes. Almost undetectable in placenta.

The protein resides in the nucleus. It localises to the chromosome. Its subcellular location is the cytoplasm. The protein localises to the cytoplasmic vesicle. It is found in the secretory vesicle. The protein resides in the secreted. Cytokine that binds to and signals through the IL1RL1/ST2 receptor which in turn activates NF-kappa-B and MAPK signaling pathways in target cells. Involved in the maturation of Th2 cells inducing the secretion of T-helper type 2-associated cytokines. Also involved in activation of mast cells, basophils, eosinophils and natural killer cells. Acts as an enhancer of polarization of alternatively activated macrophages. Acts as a chemoattractant for Th2 cells, and may function as an 'alarmin', that amplifies immune responses during tissue injury. Induces rapid UCP2-dependent mitochondrial rewiring that attenuates the generation of reactive oxygen species and preserves the integrity of Krebs cycle required for persistent production of itaconate and subsequent GATA3-dependent differentiation of inflammation-resolving alternatively activated macrophages. Its function is as follows. In quiescent endothelia the uncleaved form is constitutively and abundantly expressed, and acts as a chromatin-associated nuclear factor with transcriptional repressor properties, it may sequester nuclear NF-kappaB/RELA, lowering expression of its targets. This form is rapidely lost upon angiogenic or pro-inflammatory activation. In Homo sapiens (Human), this protein is Interleukin-33.